Reading from the N-terminus, the 81-residue chain is Exodeoxyribonuclease 7 small subunit (81 aa).

The protein belongs to the XseB family. Heterooligomer composed of large and small subunits.

The protein localises to the cytoplasm. It catalyses the reaction Exonucleolytic cleavage in either 5'- to 3'- or 3'- to 5'-direction to yield nucleoside 5'-phosphates.. In terms of biological role, bidirectionally degrades single-stranded DNA into large acid-insoluble oligonucleotides, which are then degraded further into small acid-soluble oligonucleotides. The sequence is that of Exodeoxyribonuclease 7 small subunit from Ruegeria sp. (strain TM1040) (Silicibacter sp.).